A 216-amino-acid chain; its full sequence is Thymidylate kinase (216 aa).

9-16 (GIEGSGKT) contributes to the ATP binding site.

This sequence belongs to the thymidylate kinase family.

It carries out the reaction dTMP + ATP = dTDP + ADP. Phosphorylation of dTMP to form dTDP in both de novo and salvage pathways of dTTP synthesis. The chain is Thymidylate kinase from Syntrophotalea carbinolica (strain DSM 2380 / NBRC 103641 / GraBd1) (Pelobacter carbinolicus).